Reading from the N-terminus, the 220-residue chain is HTH-type transcriptional repressor GlaR (220 aa).

The HTH gntR-type domain occupies 1-69 (MTITSLDGYR…NQKGYRVASM (69 aa)). The segment at residues 29–48 (MSLLTSRYALGVGPLREALS) is a DNA-binding region (H-T-H motif).

The protein localises to the cytoplasm. With respect to regulation, the repressive effect at the glaH promoter site is specifically relieved upon glutarate binding. Negatively regulates the expression of the glaH-lhgD-gabDTP operon in a temporal manner during entry into stationary phase or during the first few hours of carbon starvation. Thereby is involved in the regulation of a L-lysine degradation pathway that proceeds via cadaverine, glutarate and L-2-hydroxyglutarate. Binds to two primary and two secondary sites in the promoter region of the glaH operon with the consensus sequences TTGTN5TTTT and ATGTN5TTTT of the primary sites, each separated by six nucleotides. The protein is HTH-type transcriptional repressor GlaR of Escherichia coli (strain K12).